A 362-amino-acid chain; its full sequence is Melatonin receptor type 1B (362 aa).

Residues 1 to 42 (MSENGSFANCCEAGGWAVRPGWSGAGSARPSRTPRPPWVAPA) are Extracellular-facing. N-linked (GlcNAc...) asparagine glycosylation occurs at asparagine 4. Residues 43 to 63 (LSAVLIVTTAVDVVGNLLVIL) traverse the membrane as a helical segment. Over 64–76 (SVLRNRKLRNAGN) the chain is Cytoplasmic. The chain crosses the membrane as a helical span at residues 77–97 (LFLVSLALADLVVAFYPYPLI). Over 98–115 (LVAIFYDGWALGEEHCKA) the chain is Extracellular. Cysteines 113 and 190 form a disulfide. The chain crosses the membrane as a helical span at residues 116–136 (SAFVMGLSVIGSVFNITAIAI). The Cytoplasmic portion of the chain corresponds to 137-155 (NRYCYICHSMAYHRIYRRW). A helical transmembrane segment spans residues 156–176 (HTPLHICLIWLLTVVALLPNF). Melatonin is bound by residues asparagine 175 and glutamine 194. Residues 177–200 (FVGSLEYDPRIYSCTFIQTASTQY) are Extracellular-facing. A helical membrane pass occupies residues 201–221 (TAAVVVIHFLLPIAVVSFCYL). At 222–253 (RIWVLVLQARRKAKPESRLCLKPSDLRSFLTM) the chain is on the cytoplasmic side. Residues 254-274 (FVVFVIFAICWAPLNCIGLAV) traverse the membrane as a helical segment. Residues 275–287 (AINPQEMAPQIPE) lie on the Extracellular side of the membrane. The chain crosses the membrane as a helical span at residues 288–308 (GLFVTSYLLAYFNSCLNAIVY). Topologically, residues 309 to 362 (GLLNQNFRREYKRILLALWNPRHCIQDASKGSHAEGLQSPAPPIIGVQHQADAL) are cytoplasmic.

It belongs to the G-protein coupled receptor 1 family. In terms of assembly, interacts with GPR61, GPR62 and GPR135. In terms of tissue distribution, expressed in retina and less in brain and hippocampus.

The protein localises to the cell membrane. Its function is as follows. High affinity receptor for melatonin. Likely to mediate the reproductive and circadian actions of melatonin. The activity of this receptor is mediated by pertussis toxin sensitive G proteins that inhibit adenylate cyclase activity. The protein is Melatonin receptor type 1B (MTNR1B) of Homo sapiens (Human).